A 719-amino-acid polypeptide reads, in one-letter code: DNA ligase (719 aa).

NAD(+)-binding positions include 42 to 46 (DAAYD), 92 to 93 (SL), and glutamate 126. The N6-AMP-lysine intermediate role is filled by lysine 128. 4 residues coordinate NAD(+): arginine 149, glutamate 185, lysine 301, and lysine 325. Zn(2+)-binding residues include cysteine 430, cysteine 433, cysteine 448, and cysteine 454. Positions 640–719 (ATGSPVEGKT…DDWFKLVGED (80 aa)) constitute a BRCT domain.

Belongs to the NAD-dependent DNA ligase family. LigA subfamily. Mg(2+) serves as cofactor. It depends on Mn(2+) as a cofactor.

The catalysed reaction is NAD(+) + (deoxyribonucleotide)n-3'-hydroxyl + 5'-phospho-(deoxyribonucleotide)m = (deoxyribonucleotide)n+m + AMP + beta-nicotinamide D-nucleotide.. In terms of biological role, DNA ligase that catalyzes the formation of phosphodiester linkages between 5'-phosphoryl and 3'-hydroxyl groups in double-stranded DNA using NAD as a coenzyme and as the energy source for the reaction. It is essential for DNA replication and repair of damaged DNA. The protein is DNA ligase of Brucella ovis (strain ATCC 25840 / 63/290 / NCTC 10512).